The chain runs to 644 residues: Large subunit GTPase 1 homolog (644 aa).

Residues 1 to 31 (MGRRRAPGGGSLGRVLIRQQTQRSRSHRHTD) are disordered. Residues S93 and S97 each carry the phosphoserine modification. A CP-type G domain is found at 164 to 430 (WRQLWRVIER…LCDCPGLVMP (267 aa)). Residue 212 to 215 (NKAD) coordinates GTP. The interval 253–345 (KEEVDSVAGD…KNAENQQVNN (93 aa)) is disordered. Over residues 302–326 (CQEDEEEDWQTCSEEDSVPEEEEGC) the composition is skewed to acidic residues. GTP is bound by residues 379-386 (GYPNVGKS) and 423-426 (DCPG). The disordered stretch occupies residues 618–644 (VPGKPWKKHGNRNKKEKSRRLYKHLDV). Basic residues predominate over residues 622-644 (PWKKHGNRNKKEKSRRLYKHLDV).

This sequence belongs to the TRAFAC class YlqF/YawG GTPase family. LSG1 subfamily.

The protein resides in the cytoplasm. It is found in the endoplasmic reticulum. It localises to the nucleus. The protein localises to the cajal body. The catalysed reaction is GTP + H2O = GDP + phosphate + H(+). In terms of biological role, functions as a GTPase. May act by mediating the release of NMD3 from the 60S ribosomal subunit after export into the cytoplasm during the 60S ribosomal subunit maturation. The chain is Large subunit GTPase 1 homolog from Mus musculus (Mouse).